The primary structure comprises 134 residues: Small ribosomal subunit protein uS11 (134 aa).

The protein belongs to the universal ribosomal protein uS11 family. As to quaternary structure, part of the 30S ribosomal subunit. Interacts with proteins S7 and S18. Binds to IF-3.

Its function is as follows. Located on the platform of the 30S subunit, it bridges several disparate RNA helices of the 16S rRNA. Forms part of the Shine-Dalgarno cleft in the 70S ribosome. In Parafrankia sp. (strain EAN1pec), this protein is Small ribosomal subunit protein uS11.